The sequence spans 295 residues: MKTVARALSGSARAMARKPMRFTDLRTVQLRPPIVPTHRNFEVSPDHPLWAFFPDGNNSQTCYREASDLDIQSRAWTTAELRRKSFEDLHQLWYLVLKERNVLAREVRLADAINERNTHVHDQVDEKLLLTQKRIKQVLLERQTAFERVQTFTQQQQEYLEEFRQRYLDADASQIASYNEKLIRLQYAFFGIQPQLEDYNWETDINERFVDGLNYVSHIKLARYFAQNPDVEEEIGYPLKGVVEELPFLLRDPSEAVEEVRALRQSGAQVKLDKIDVLPFLRSALQAALEQEGRM.

This sequence belongs to the universal ribosomal protein uL29 family. As to quaternary structure, component of the mitochondrial large ribosomal subunit. Mature mitochondrial ribosomes consist of a small (37S) and a large (54S) subunit. The 37S subunit contains at least 33 different proteins and 1 molecule of RNA (15S). The 54S subunit contains at least 45 different proteins and 1 molecule of RNA (21S).

The protein localises to the mitochondrion. This chain is Large ribosomal subunit protein uL29m (MRPL4), found in Meyerozyma guilliermondii (strain ATCC 6260 / CBS 566 / DSM 6381 / JCM 1539 / NBRC 10279 / NRRL Y-324) (Yeast).